Reading from the N-terminus, the 509-residue chain is Bifunctional purine biosynthesis protein PurH (509 aa).

Positions 1 to 144 constitute an MGS-like domain; it reads MKRALLSVSD…KNARDVIVVV (144 aa).

Belongs to the PurH family.

It catalyses the reaction (6R)-10-formyltetrahydrofolate + 5-amino-1-(5-phospho-beta-D-ribosyl)imidazole-4-carboxamide = 5-formamido-1-(5-phospho-D-ribosyl)imidazole-4-carboxamide + (6S)-5,6,7,8-tetrahydrofolate. The catalysed reaction is IMP + H2O = 5-formamido-1-(5-phospho-D-ribosyl)imidazole-4-carboxamide. Its pathway is purine metabolism; IMP biosynthesis via de novo pathway; 5-formamido-1-(5-phospho-D-ribosyl)imidazole-4-carboxamide from 5-amino-1-(5-phospho-D-ribosyl)imidazole-4-carboxamide (10-formyl THF route): step 1/1. The protein operates within purine metabolism; IMP biosynthesis via de novo pathway; IMP from 5-formamido-1-(5-phospho-D-ribosyl)imidazole-4-carboxamide: step 1/1. The protein is Bifunctional purine biosynthesis protein PurH of Oenococcus oeni (strain ATCC BAA-331 / PSU-1).